A 405-amino-acid polypeptide reads, in one-letter code: Tryptophan synthase beta chain (405 aa).

K98 carries the post-translational modification N6-(pyridoxal phosphate)lysine.

The protein belongs to the TrpB family. In terms of assembly, tetramer of two alpha and two beta chains. The cofactor is pyridoxal 5'-phosphate.

It catalyses the reaction (1S,2R)-1-C-(indol-3-yl)glycerol 3-phosphate + L-serine = D-glyceraldehyde 3-phosphate + L-tryptophan + H2O. It functions in the pathway amino-acid biosynthesis; L-tryptophan biosynthesis; L-tryptophan from chorismate: step 5/5. Its function is as follows. The beta subunit is responsible for the synthesis of L-tryptophan from indole and L-serine. The protein is Tryptophan synthase beta chain of Afipia carboxidovorans (strain ATCC 49405 / DSM 1227 / KCTC 32145 / OM5) (Oligotropha carboxidovorans).